A 370-amino-acid chain; its full sequence is Germination protease (370 aa).

Residues 1 to 15 constitute a propeptide that is removed on maturation; the sequence is MEKELDLSQYSVRTD.

The protein belongs to the peptidase A25 family. As to quaternary structure, homotetramer. In terms of processing, autoproteolytically processed. The inactive tetrameric zymogen termed p46 autoprocesses to a smaller form termed p41, which is active only during spore germination.

The catalysed reaction is Endopeptidase action with P4 Glu or Asp, P1 preferably Glu &gt; Asp, P1' hydrophobic and P2' Ala.. Initiates the rapid degradation of small, acid-soluble proteins during spore germination. The sequence is that of Germination protease (gpr) from Priestia megaterium (strain ATCC 12872 / QMB1551) (Bacillus megaterium).